We begin with the raw amino-acid sequence, 96 residues long: Integration host factor subunit beta (96 aa).

The segment at 59 to 86 is disordered; sequence RVGRNPKTGETVELDGKHVPHFKPGKEL. Over residues 72-86 the composition is skewed to basic and acidic residues; the sequence is LDGKHVPHFKPGKEL.

Belongs to the bacterial histone-like protein family. As to quaternary structure, heterodimer of an alpha and a beta chain.

In terms of biological role, this protein is one of the two subunits of integration host factor, a specific DNA-binding protein that functions in genetic recombination as well as in transcriptional and translational control. This is Integration host factor subunit beta from Pseudoalteromonas atlantica (strain T6c / ATCC BAA-1087).